The sequence spans 593 residues: MPRGLELLIAQTILQGFDAQYGRFLEVTSGAQQRFEQADWHAVQQAMKSRIHLYDHHVGLVVEQLRCITDGKSTDADFLLRVKEHYTRLLPDYPRFEIAESFFNSVYCRLFDHRSLTPERLFIFSSQPERRFRTIPRPLAKDFFPDHGWEPLLMRILSDLPLCLPWQNKSRDIRYIIAHLTETLGEDALPRCHVQVANELFYRNKAAWLVGKLTTPDGTLPFLLPIHRTDEGELFVDTCLTTTAEASIVFGFARSYFMVYAPLPAALVEWLREILPGKTTAELYMAIGCQKHAKTESYREYLCYLAESDEKFIEAPGIRGMVMLVFTLPGFDRVFKIIKDKFAPQKEMSAAHVRACYQLVKEHDRVGRMADTQEFENFVLDKRQIDPALMALLRQEAPEKITDLGEHIVIRHLYIERRMVPLNIWLEQVEGQQLRDAIEEYGNAIRQLAAANIFPGDMLFKNFGVTRHGRVVFYDYDEICYMTEVNFRDIPPARYPEDELASEPWYSVSPGDVFPEEFRHWLCADPRIGPLFEEMHADLFRADYWRALQTRIKEGHVEDVYAYRRRQRFSVRYETDRRPDKAFAPPSGNVRRA.

Residues 315–321 (APGIRGM) and lysine 336 contribute to the ATP site. The active site involves aspartate 371.

Belongs to the AceK family.

Its subcellular location is the cytoplasm. It carries out the reaction L-seryl-[isocitrate dehydrogenase] + ATP = O-phospho-L-seryl-[isocitrate dehydrogenase] + ADP + H(+). Bifunctional enzyme which can phosphorylate or dephosphorylate isocitrate dehydrogenase (IDH) on a specific serine residue. This is a regulatory mechanism which enables bacteria to bypass the Krebs cycle via the glyoxylate shunt in response to the source of carbon. When bacteria are grown on glucose, IDH is fully active and unphosphorylated, but when grown on acetate or ethanol, the activity of IDH declines drastically concomitant with its phosphorylation. The polypeptide is Isocitrate dehydrogenase kinase/phosphatase (Salmonella typhi).